Here is a 101-residue protein sequence, read N- to C-terminus: UPF0235 protein MmarC6_1603 (101 aa).

Belongs to the UPF0235 family.

In Methanococcus maripaludis (strain C6 / ATCC BAA-1332), this protein is UPF0235 protein MmarC6_1603.